A 246-amino-acid chain; its full sequence is Ribonuclease PH (246 aa).

Phosphate contacts are provided by residues arginine 91 and 129–131 (GTR).

It belongs to the RNase PH family. In terms of assembly, homohexameric ring arranged as a trimer of dimers.

It catalyses the reaction tRNA(n+1) + phosphate = tRNA(n) + a ribonucleoside 5'-diphosphate. Phosphorolytic 3'-5' exoribonuclease that plays an important role in tRNA 3'-end maturation. Removes nucleotide residues following the 3'-CCA terminus of tRNAs; can also add nucleotides to the ends of RNA molecules by using nucleoside diphosphates as substrates, but this may not be physiologically important. Probably plays a role in initiation of 16S rRNA degradation (leading to ribosome degradation) during starvation. The sequence is that of Ribonuclease PH from Burkholderia orbicola (strain MC0-3).